Reading from the N-terminus, the 518-residue chain is Glutamate--cysteine ligase (518 aa).

The protein belongs to the glutamate--cysteine ligase type 1 family. Type 1 subfamily.

It carries out the reaction L-cysteine + L-glutamate + ATP = gamma-L-glutamyl-L-cysteine + ADP + phosphate + H(+). It functions in the pathway sulfur metabolism; glutathione biosynthesis; glutathione from L-cysteine and L-glutamate: step 1/2. The sequence is that of Glutamate--cysteine ligase from Salmonella gallinarum (strain 287/91 / NCTC 13346).